The primary structure comprises 324 residues: MSQDQESPRCTHDQHLQTFSETQSLEVAQVSKALEKTLLSSSHPLVPGKLKEAPAAKAESPLEVPQSFCSSSIAVTTTSSSESDEASSNQEEEDSPSSSEDTSDPRNVPADALDQKVAFLVNFMLHKCQMKKPITKADMLKIIIKDDESHFSEILLRASEHLEMIFGLDVVEVDPTTHCYGLFIKLGLTYDGMLSGEKGVPKTGLLIIVLGVIFMKGNRATEEEVWEVLNLTGVYSGKKHFIFGEPRMLITKDFVKEKYLEYQQVANSDPARYEFLWGPRAKAETSKMKVLEFVAKVHGSYPHSFPSQYAEALKEEEERARARI.

The span at 1–15 (MSQDQESPRCTHDQH) shows a compositional bias: basic and acidic residues. Disordered regions lie at residues 1–22 (MSQD…FSET) and 39–108 (LSSS…PRNV). Positions 70 to 81 (SSSIAVTTTSSS) are enriched in low complexity. Residues 82–95 (ESDEASSNQEEEDS) show a composition bias toward acidic residues. The MAGE domain occupies 113–312 (LDQKVAFLVN…HSFPSQYAEA (200 aa)).

The polypeptide is Melanoma-associated antigen B16 (MAGEB16) (Homo sapiens (Human)).